The following is a 464-amino-acid chain: Protein FAM90A18 (464 aa).

Disordered regions lie at residues 1 to 42 (MMAR…DPRL), 70 to 387 (PATL…ASHD), and 415 to 437 (HSPE…SEAP). 2 stretches are compositionally biased toward basic and acidic residues: residues 74 to 89 (GKKE…KPRV) and 97 to 114 (NKDK…DPQR). The segment covering 180-197 (LASLSPLRKASLSSSSSL) has biased composition (low complexity).

It belongs to the FAM90 family.

The polypeptide is Protein FAM90A18 (Homo sapiens (Human)).